A 142-amino-acid chain; its full sequence is Large ribosomal subunit protein bL21 (142 aa).

Over residues 73 to 84 (KRRRQNSKRTRG) the composition is skewed to basic residues. A disordered region spans residues 73-142 (KRRRQNSKRT…KAAAKAESAE (70 aa)). The segment covering 107–125 (KAAEKKAPKADAAEGEAAK) has biased composition (basic and acidic residues). The segment covering 126 to 135 (PKKAAPKKAA) has biased composition (basic residues).

This sequence belongs to the bacterial ribosomal protein bL21 family. As to quaternary structure, part of the 50S ribosomal subunit. Contacts protein L20.

Its function is as follows. This protein binds to 23S rRNA in the presence of protein L20. This is Large ribosomal subunit protein bL21 from Brucella canis (strain ATCC 23365 / NCTC 10854 / RM-666).